The sequence spans 48 residues: Palustrin-3a (48 aa).

A disulfide bridge links Cys-43 with Cys-48.

As to expression, expressed by the skin glands.

The protein resides in the secreted. Functionally, antimicrobial activity against Gram-negative bacterium E.coli. This Lithobates palustris (Pickerel frog) protein is Palustrin-3a.